The chain runs to 185 residues: Ribosome-recycling factor (185 aa).

It belongs to the RRF family.

It is found in the cytoplasm. Its function is as follows. Responsible for the release of ribosomes from messenger RNA at the termination of protein biosynthesis. May increase the efficiency of translation by recycling ribosomes from one round of translation to another. The chain is Ribosome-recycling factor from Francisella tularensis subsp. holarctica (strain FTNF002-00 / FTA).